The primary structure comprises 355 residues: MLDRLQAVENRYEKLNELLSDPAIISDSNKLREYSKEQSDIQETVEVYREYKDVREQLKDAKAMLEDKLDAEMREMVKEEVSELESQDKTLSERLKILLVPKDPNDDKNVIVEVRGAAGGDEAALFAGDLYRMYSRYAEVQGWKTEIIEASYTELGGYKEIIFMINGKGAFAKLKFENGAHRVQRVPETESGGRIHTSTATVAVLPEAEEVEIDIHEKDVRVDTFASSGPGGQSVNTTMSAVRLTHLPTGVVVSCQDEKSQIKNKEKAMKVLRARVYDKFRQEAQAEYDQNRKQAVGTGDRSERIRTYNFPQNRVTDHRIGLTIQKLDQILQGKLDDFINALVMEDQAQKMEAAE.

Residue glutamine 233 is modified to N5-methylglutamine.

It belongs to the prokaryotic/mitochondrial release factor family. Methylated by PrmC. Methylation increases the termination efficiency of RF1.

It is found in the cytoplasm. Its function is as follows. Peptide chain release factor 1 directs the termination of translation in response to the peptide chain termination codons UAG and UAA. The chain is Peptide chain release factor 1 from Bacillus cereus (strain ATCC 14579 / DSM 31 / CCUG 7414 / JCM 2152 / NBRC 15305 / NCIMB 9373 / NCTC 2599 / NRRL B-3711).